A 94-amino-acid chain; its full sequence is Small ribosomal subunit protein bS16c (94 aa).

Belongs to the bacterial ribosomal protein bS16 family.

The protein localises to the plastid. The protein resides in the chloroplast. The sequence is that of Small ribosomal subunit protein bS16c from Phalaenopsis aphrodite subsp. formosana (Moth orchid).